The sequence spans 693 residues: DNA-directed RNA polymerase subunit beta' (693 aa).

Positions 76, 78, 94, and 97 each coordinate Zn(2+). Residues Asp496, Asp498, and Asp500 each contribute to the Mg(2+) site.

Belongs to the RNA polymerase beta' chain family. RpoC1 subfamily. In terms of assembly, in plastids the minimal PEP RNA polymerase catalytic core is composed of four subunits: alpha, beta, beta', and beta''. When a (nuclear-encoded) sigma factor is associated with the core the holoenzyme is formed, which can initiate transcription. It depends on Mg(2+) as a cofactor. Zn(2+) serves as cofactor.

The protein resides in the plastid. Its subcellular location is the chloroplast. The enzyme catalyses RNA(n) + a ribonucleoside 5'-triphosphate = RNA(n+1) + diphosphate. Its function is as follows. DNA-dependent RNA polymerase catalyzes the transcription of DNA into RNA using the four ribonucleoside triphosphates as substrates. The sequence is that of DNA-directed RNA polymerase subunit beta' from Nuphar advena (Common spatterdock).